Consider the following 317-residue polypeptide: Apolipoprotein E (317 aa).

A signal peptide spans methionine 1–threonine 18. Repeat copies occupy residues glutamate 79 to glycine 100, proline 101 to glycine 122, alanine 123 to glycine 144, glutamine 145 to valine 166, arginine 167 to glutamate 188, arginine 189 to alanine 210, threonine 211 to arginine 232, and glycine 233 to glutamate 254. The 8 X 22 AA approximate tandem repeats stretch occupies residues glutamate 79–glutamate 254. Methionine sulfoxide is present on methionine 142. Positions histidine 157–arginine 167 are LDL and other lipoprotein receptors binding. Valine 161 to arginine 164 provides a ligand contact to heparin. Residues alanine 209 to methionine 289 are lipid-binding and lipoprotein association. Glycine 228–leucine 235 is a heparin binding site. The segment at serine 265–glutamine 317 is homooligomerization. The tract at residues arginine 277–methionine 289 is specificity for association with VLDL.

It belongs to the apolipoprotein A1/A4/E family. As to quaternary structure, homotetramer. May interact with ABCA1; functionally associated with ABCA1 in the biogenesis of HDLs. May interact with APP/A4 amyloid-beta peptide; the interaction is extremely stable in vitro but its physiological significance is unclear. May interact with MAPT. May interact with MAP2. In the cerebrospinal fluid, interacts with secreted SORL1. Interacts with PMEL; this allows the loading of PMEL luminal fragment on ILVs to induce fibril nucleation. Post-translationally, APOE exists as multiple glycosylated and sialylated glycoforms within cells and in plasma. The extent of glycosylation and sialylation are tissue and context specific. Glycated in plasma VLDL. In terms of processing, phosphorylated by FAM20C in the extracellular medium.

Its subcellular location is the secreted. The protein localises to the extracellular space. It is found in the extracellular matrix. It localises to the extracellular vesicle. The protein resides in the endosome. Its subcellular location is the multivesicular body. Its function is as follows. APOE is an apolipoprotein, a protein associating with lipid particles, that mainly functions in lipoprotein-mediated lipid transport between organs via the plasma and interstitial fluids. APOE is a core component of plasma lipoproteins and is involved in their production, conversion and clearance. Apolipoproteins are amphipathic molecules that interact both with lipids of the lipoprotein particle core and the aqueous environment of the plasma. As such, APOE associates with chylomicrons, chylomicron remnants, very low density lipoproteins (VLDL) and intermediate density lipoproteins (IDL) but shows a preferential binding to high-density lipoproteins (HDL). It also binds a wide range of cellular receptors including the LDL receptor/LDLR and the very low-density lipoprotein receptor/VLDLR that mediate the cellular uptake of the APOE-containing lipoprotein particles. Finally, APOE also has a heparin-binding activity and binds heparan-sulfate proteoglycans on the surface of cells, a property that supports the capture and the receptor-mediated uptake of APOE-containing lipoproteins by cells. This is Apolipoprotein E (APOE) from Sus scrofa (Pig).